Here is a 933-residue protein sequence, read N- to C-terminus: Progesterone receptor (933 aa).

Positions 1 to 48 are disordered; that stretch reads MTELKAKGPRAPHVAGGPPSPEVGSPLLCRPAAGPFEGSQTSDTLPEV. The tract at residues 1 to 164 is AF3; mediates transcriptional activation; sequence MTELKAKGPR…PATQRVLSPL (164 aa). The tract at residues 1-566 is modulating, Pro-Rich; the sequence is MTELKAKGPR…YSFESLPQKI (566 aa). Residue S20 is modified to Phosphoserine. Residues 55–59 carry the LXXL motif 1 motif; that stretch reads LDGLL. The disordered stretch occupies residues 66 to 255; it reads GQDLPDEKTQ…GAAAGGGAAA (190 aa). A Phosphoserine modification is found at S81. The LXXL motif 2 signature appears at 115 to 119; it reads LDTLL. A phosphoserine mark is found at S130 and S162. Residues 165–305 form a mediates transcriptional transrepression region; sequence MSRSGGKTGD…LATTMMDFIH (141 aa). The Nuclear localization signal signature appears at 183 to 187; the sequence is KVLPR. 2 positions are modified to phosphoserine: S190 and S213. Residue S294 is modified to Phosphoserine; by MAPK1. Residues 331 to 378 are disordered; that stretch reads GGAGAASAFAPPQSSPSASSTPVAVGDFPDCAYPPDAEPKDNAYPLYG. Over residues 335–350 the composition is skewed to low complexity; sequence AASAFAPPQSSPSASS. S345 is modified (phosphoserine; by MAPK). Residue K388 forms a Glycyl lysine isopeptide (Lys-Gly) (interchain with G-Cter in SUMO); alternate linkage. A Glycyl lysine isopeptide (Lys-Gly) (interchain with G-Cter in ubiquitin); alternate cross-link involves residue K388. Position 400 is a phosphoserine; by CDK2 (S400). A disordered region spans residues 415–454; it reads PDYPLGPPPQLPPRAPPSRPGEAAVTAAPASASVSSASSP. Residues 418-433 are compositionally biased toward pro residues; that stretch reads PLGPPPQLPPRAPPSR. Over residues 437–454 the composition is skewed to low complexity; it reads AAVTAAPASASVSSASSP. The AF1; mediates transcriptional activation stretch occupies residues 456 to 546; it reads STLECILYKA…VYPPYLNYLR (91 aa). K531 is covalently cross-linked (Glycyl lysine isopeptide (Lys-Gly) (interchain with G-Cter in SUMO)). NR C4-type zinc fingers lie at residues 567 to 587 and 603 to 627; these read CLIC…CGSC and CAGR…LRKC. The segment at residues 567-639 is a DNA-binding region (nuclear receptor); sequence CLICGDEASG…AGMVLGGRKF (73 aa). S676 carries the phosphoserine modification. Positions 679–913 constitute an NR LBD domain; it reads QDIQLIPPLI…EFPEMMSEVI (235 aa). Residues 687–933 are AF2; mediates transcriptional activation; the sequence is LIKLLMSIEP…MVKPLLFHKK (247 aa).

The protein belongs to the nuclear hormone receptor family. Interacts with SMARD1 and UNC45A. Interacts with CUEDC2; the interaction promotes ubiquitination, decreases sumoylation, and represses transcriptional activity. Interacts with PIAS3; the interaction promotes sumoylation of PR in a hormone-dependent manner, inhibits DNA-binding, and alters nuclear export. Interacts with SP1; the interaction requires ligand-induced phosphorylation on Ser-345 by ERK1/2-MAPK. Interacts with PRMT2. Interacts with NCOA2 and NCOA1. Interacts with KLF9. Interacts with GTF2B. In terms of processing, phosphorylated on multiple serine sites. Several of these sites are hormone-dependent. Phosphorylation on Ser-294 is highly hormone-dependent and modulates ubiquitination and sumoylation on Lys-388. Phosphorylation on Ser-345 also requires induction by hormone. Basal phosphorylation on Ser-81, Ser-162, Ser-190 and Ser-400 is increased in response to progesterone and can be phosphorylated in vitro by the CDK2-A1 complex. Increased levels of phosphorylation on Ser-400 also in the presence of EGF, heregulin, IGF, PMA and FBS. Phosphorylation at this site by CDK2 is ligand-independent, and increases nuclear translocation and transcriptional activity. Phosphorylation at Ser-162 and Ser-294, but not at Ser-190, is impaired during the G(2)/M phase of the cell cycle. Phosphorylation on Ser-345 by ERK1/2 MAPK is required for interaction with SP1. Post-translationally, sumoylation is hormone-dependent and represses transcriptional activity. Sumoylation on all three sites is enhanced by PIAS3. Desumoylated by SENP1. Sumoylation on Lys-388, the main site of sumoylation, is repressed by ubiquitination on the same site, and modulated by phosphorylation at Ser-294. Ubiquitination is hormone-dependent and represses sumoylation on the same site. Promoted by MAPK-mediated phosphorylation on Ser-294. In terms of processing, palmitoylated by ZDHHC7 and ZDHHC21. Palmitoylation is required for plasma membrane targeting and for rapid intracellular signaling via ERK and AKT kinases and cAMP generation.

It localises to the nucleus. The protein localises to the cytoplasm. The steroid hormones and their receptors are involved in the regulation of eukaryotic gene expression and affect cellular proliferation and differentiation in target tissues. Transcriptional activator of several progesteron-dependent promoters in a variety of cell types. Involved in activation of SRC-dependent MAPK signaling on hormone stimulation. The polypeptide is Progesterone receptor (PGR) (Trachypithecus obscurus (Dusky leaf-monkey)).